Consider the following 269-residue polypeptide: Enoyl-[acyl-carrier-protein] reductase [NADH] (269 aa).

Residues 20–21 (SI), 64–65 (DV), and 95–96 (IG) each bind NAD(+). Y158 lines the substrate pocket. NAD(+) contacts are provided by K165 and I194.

This sequence belongs to the short-chain dehydrogenases/reductases (SDR) family. FabI subfamily. Homodimer. Homotetramer.

The enzyme catalyses a 2,3-saturated acyl-[ACP] + NAD(+) = a (2E)-enoyl-[ACP] + NADH + H(+). It catalyses the reaction a 2,3-saturated acyl-CoA + NAD(+) = a (2E)-enoyl-CoA + NADH + H(+). It participates in lipid metabolism; mycolic acid biosynthesis. In terms of biological role, enoyl-ACP reductase of the type II fatty acid syntase (FAS-II) system, which is involved in the biosynthesis of mycolic acids, a major component of mycobacterial cell walls. Catalyzes the NADH-dependent reduction of the double bond of 2-trans-enoyl-[acyl-carrier protein], an essential step in the fatty acid elongation cycle of the FAS-II pathway. Shows preference for long-chain fatty acyl thioester substrates, and can also use 2-trans-enoyl-CoAs as alternative substrates. The mycobacterial FAS-II system utilizes the products of the FAS-I system as primers to extend fatty acyl chain lengths up to C56, forming the meromycolate chain that serves as the precursor for final mycolic acids. Is the primary target of the first-line antitubercular drug isoniazid (INH) and of the second-line drug ethionamide (ETH). Overexpressed inhA confers INH and ETH resistance to M.bovis. The mechanism of isoniazid action against InhA is covalent attachment of the activated form of the drug to the nicotinamide ring of NAD and binding of the INH-NAD adduct to the active site of InhA. Similarly, the ETH-NAD adduct binds InhA. This Mycobacterium bovis (strain ATCC BAA-935 / AF2122/97) protein is Enoyl-[acyl-carrier-protein] reductase [NADH].